A 594-amino-acid chain; its full sequence is Solute carrier family 13 member 1 (594 aa).

5 consecutive transmembrane segments (helical) span residues 13 to 33 (FLLV…IRTK), 40 to 60 (ILFV…ITAL), 77 to 97 (VASA…CLAT), 113 to 133 (VMMV…STAF), and 134 to 154 (LSMW…VEAV). N-linked (GlcNAc...) asparagine glycosylation occurs at N174. Positions 192-220 (TNEKKEKTKPAPGSSHDKGKVSRKMETEK) are enriched in basic and acidic residues. The segment at 192-226 (TNEKKEKTKPAPGSSHDKGKVSRKMETEKNAVTGA) is disordered. Transmembrane regions (helical) follow at residues 239–259 (LMCL…ITGT), 283–303 (SWFL…WIWL), 347–367 (IVTL…DPGF), 380–400 (GYVT…LIPA), 461–481 (LSPL…LIVT), 487–507 (ASNP…AEAI), 511–531 (PLQI…LPVA), and 552–572 (AGLG…FTWI). An N-linked (GlcNAc...) asparagine glycan is attached at N590.

The protein belongs to the SLC13A/DASS transporter (TC 2.A.47) family. NADC subfamily. Highly expressed in kidney and ileum, detected at lower levels in duodenum/jejunum and colon, and at very low levels in cecum, testis, adrenal and adipose tissues. In terms of tissue distribution, expressed in the kidney.

It is found in the apical cell membrane. The catalysed reaction is sulfate(out) + 3 Na(+)(out) = sulfate(in) + 3 Na(+)(in). It carries out the reaction selenate(out) + 3 Na(+)(out) = selenate(in) + 3 Na(+)(in). It catalyses the reaction thiosulfate(out) + 3 Na(+)(out) = thiosulfate(in) + 3 Na(+)(in). Its function is as follows. Sodium:sulfate symporter that mediates sulfate reabsorption in the kidney and small intestine. Can also mediate the transport of selenate and thiosulfate. This Mus musculus (Mouse) protein is Solute carrier family 13 member 1 (Slc13a1).